A 240-amino-acid polypeptide reads, in one-letter code: Ribonuclease PH (240 aa).

Residues Arg87 and 125–127 (GTR) contribute to the phosphate site.

This sequence belongs to the RNase PH family. Homohexameric ring arranged as a trimer of dimers.

It catalyses the reaction tRNA(n+1) + phosphate = tRNA(n) + a ribonucleoside 5'-diphosphate. In terms of biological role, phosphorolytic 3'-5' exoribonuclease that plays an important role in tRNA 3'-end maturation. Removes nucleotide residues following the 3'-CCA terminus of tRNAs; can also add nucleotides to the ends of RNA molecules by using nucleoside diphosphates as substrates, but this may not be physiologically important. Probably plays a role in initiation of 16S rRNA degradation (leading to ribosome degradation) during starvation. This chain is Ribonuclease PH, found in Pseudomonas fluorescens (strain Pf0-1).